Reading from the N-terminus, the 136-residue chain is ATP synthase epsilon chain (136 aa).

This sequence belongs to the ATPase epsilon chain family. F-type ATPases have 2 components, CF(1) - the catalytic core - and CF(0) - the membrane proton channel. CF(1) has five subunits: alpha(3), beta(3), gamma(1), delta(1), epsilon(1). CF(0) has three main subunits: a, b and c.

The protein localises to the cell inner membrane. Its function is as follows. Produces ATP from ADP in the presence of a proton gradient across the membrane. This chain is ATP synthase epsilon chain, found in Afipia carboxidovorans (strain ATCC 49405 / DSM 1227 / KCTC 32145 / OM5) (Oligotropha carboxidovorans).